We begin with the raw amino-acid sequence, 607 residues long: Glucose-6-phosphate isomerase, glycosomal (607 aa).

Catalysis depends on glutamate 411, which acts as the Proton donor. Catalysis depends on residues histidine 442 and lysine 571. A Microbody targeting signal motif is present at residues 605–607 (SHL).

Belongs to the GPI family. As to quaternary structure, homodimer.

It is found in the glycosome. It carries out the reaction alpha-D-glucose 6-phosphate = beta-D-fructose 6-phosphate. The protein operates within carbohydrate degradation; glycolysis; D-glyceraldehyde 3-phosphate and glycerone phosphate from D-glucose: step 2/4. The sequence is that of Glucose-6-phosphate isomerase, glycosomal (PGI) from Trypanosoma brucei brucei.